A 92-amino-acid polypeptide reads, in one-letter code: Small ribosomal subunit protein bS20 (92 aa).

The disordered stretch occupies residues methionine 1–arginine 25.

It belongs to the bacterial ribosomal protein bS20 family.

Functionally, binds directly to 16S ribosomal RNA. This is Small ribosomal subunit protein bS20 from Burkholderia mallei (strain NCTC 10247).